A 287-amino-acid chain; its full sequence is MLARFPLYLRLIRMDKPIGSLLLLWPTLNALWIASDGHPAPSLVAIFALGTLLMRSAGCAINDYADRDFDRHVKRTAERPLTSGKIRAWEAIAIAVGLALVSFLLILPLNGLTKELSVVAVFVAATYPFMKRFFAIPQAYLGIAFGFGIPMAFAAVQDTVPMIAWAMLAANVFWSVAYDTAYAMVDRDDDLKIGMRTSAITFGRHDVLAIMLCYAAMLGIYVWLGAALHFGWPYWAGWAAAAGCSIYHYTLIKDRERMACFAAFRHNNWLGGVLFAGIAAHYALAVR.

7 helical membrane passes run A30–G50, I92–L112, F133–F153, D158–Y178, V207–A227, W232–I252, and H266–V286.

Belongs to the UbiA prenyltransferase family. It depends on Mg(2+) as a cofactor.

It localises to the cell inner membrane. The enzyme catalyses all-trans-octaprenyl diphosphate + 4-hydroxybenzoate = 4-hydroxy-3-(all-trans-octaprenyl)benzoate + diphosphate. Its pathway is cofactor biosynthesis; ubiquinone biosynthesis. Its function is as follows. Catalyzes the prenylation of para-hydroxybenzoate (PHB) with an all-trans polyprenyl group. Mediates the second step in the final reaction sequence of ubiquinone-8 (UQ-8) biosynthesis, which is the condensation of the polyisoprenoid side chain with PHB, generating the first membrane-bound Q intermediate 3-octaprenyl-4-hydroxybenzoate. This is 4-hydroxybenzoate octaprenyltransferase from Burkholderia pseudomallei (strain 1106a).